We begin with the raw amino-acid sequence, 169 residues long: Ribosome maturation factor RimP (169 aa).

It belongs to the RimP family.

Its subcellular location is the cytoplasm. Its function is as follows. Required for maturation of 30S ribosomal subunits. The sequence is that of Ribosome maturation factor RimP from Streptomyces avermitilis (strain ATCC 31267 / DSM 46492 / JCM 5070 / NBRC 14893 / NCIMB 12804 / NRRL 8165 / MA-4680).